The primary structure comprises 446 residues: tRNA modification GTPase MnmE (446 aa).

3 residues coordinate (6S)-5-formyl-5,6,7,8-tetrahydrofolate: R24, E81, and K120. In terms of domain architecture, TrmE-type G spans 216–368 (GLHAVLIGPP…LHIRLRELAL (153 aa)). N226 serves as a coordination point for K(+). GTP contacts are provided by residues 226–231 (NAGKSS), 245–251 (TDVAGTT), and 270–273 (DTAG). S230 is a Mg(2+) binding site. K(+) is bound by residues T245, V247, and T250. T251 provides a ligand contact to Mg(2+). K446 lines the (6S)-5-formyl-5,6,7,8-tetrahydrofolate pocket.

The protein belongs to the TRAFAC class TrmE-Era-EngA-EngB-Septin-like GTPase superfamily. TrmE GTPase family. In terms of assembly, homodimer. Heterotetramer of two MnmE and two MnmG subunits. The cofactor is K(+).

The protein localises to the cytoplasm. Functionally, exhibits a very high intrinsic GTPase hydrolysis rate. Involved in the addition of a carboxymethylaminomethyl (cmnm) group at the wobble position (U34) of certain tRNAs, forming tRNA-cmnm(5)s(2)U34. The protein is tRNA modification GTPase MnmE of Xanthomonas oryzae pv. oryzae (strain PXO99A).